We begin with the raw amino-acid sequence, 943 residues long: Protein translocase subunit SecA (943 aa).

ATP-binding positions include glutamine 90, 108-112 (GEGKT), and aspartate 509. Residues 535 to 564 (PDNEHKPPIPKQRNSKSKGGFSKKASSKLK) are disordered.

It belongs to the SecA family. In terms of assembly, monomer and homodimer. Part of the essential Sec protein translocation apparatus which comprises SecA, SecYEG and auxiliary proteins SecDF. Other proteins may also be involved.

It localises to the cell inner membrane. Its subcellular location is the cellular thylakoid membrane. The protein resides in the cytoplasm. It carries out the reaction ATP + H2O + cellular proteinSide 1 = ADP + phosphate + cellular proteinSide 2.. Part of the Sec protein translocase complex. Interacts with the SecYEG preprotein conducting channel. Has a central role in coupling the hydrolysis of ATP to the transfer of proteins into and across the cell membrane, serving as an ATP-driven molecular motor driving the stepwise translocation of polypeptide chains across the membrane. Functionally, probably participates in protein translocation into and across both the cytoplasmic and thylakoid membranes in cyanobacterial cells. This chain is Protein translocase subunit SecA, found in Prochlorococcus marinus (strain MIT 9215).